A 300-amino-acid polypeptide reads, in one-letter code: Ribosomal protein L11 methyltransferase (300 aa).

Residues Thr152, Gly173, Asp195, and Asn234 each coordinate S-adenosyl-L-methionine.

Belongs to the methyltransferase superfamily. PrmA family.

Its subcellular location is the cytoplasm. The enzyme catalyses L-lysyl-[protein] + 3 S-adenosyl-L-methionine = N(6),N(6),N(6)-trimethyl-L-lysyl-[protein] + 3 S-adenosyl-L-homocysteine + 3 H(+). Methylates ribosomal protein L11. The chain is Ribosomal protein L11 methyltransferase from Paraburkholderia phytofirmans (strain DSM 17436 / LMG 22146 / PsJN) (Burkholderia phytofirmans).